We begin with the raw amino-acid sequence, 977 residues long: DNA-directed RNA polymerase 3A, chloroplastic (977 aa).

The N-terminal 72 residues, 1–72, are a transit peptide targeting the chloroplast; the sequence is MASTASYSPS…NNIQSQTTVC (72 aa). Residues D678, K753, and D910 contribute to the active site.

It belongs to the phage and mitochondrial RNA polymerase family.

Its subcellular location is the plastid. It is found in the chloroplast. The enzyme catalyses RNA(n) + a ribonucleoside 5'-triphosphate = RNA(n+1) + diphosphate. Its function is as follows. DNA-dependent RNA polymerase catalyzes the transcription of DNA into RNA using the four ribonucleoside triphosphates as substrates. This chain is DNA-directed RNA polymerase 3A, chloroplastic (RPOT3-SYL), found in Nicotiana tabacum (Common tobacco).